A 268-amino-acid chain; its full sequence is Cell division cycle-associated protein 3 (268 aa).

2 disordered regions span residues 1-232 and 247-268; these read MGSA…SELK and GRAW…LVES. S29 and S31 each carry phosphoserine. At T37 the chain carries Phosphothreonine. A phosphoserine mark is found at S44, S64, and S68. Residues 56 to 66 show a composition bias toward basic and acidic residues; the sequence is EGLKHAQDSDP. T76 is modified (phosphothreonine). Phosphoserine occurs at positions 87 and 94. Residues 91–120 form an F-box-like region; that stretch reads KQLSEVFETEDSKSNLPPEPVLPPEAPLSS. The segment covering 107–116 has biased composition (pro residues); that stretch reads PPEPVLPPEA. A compositionally biased stretch (low complexity) spans 117–126; that stretch reads PLSSELDLPL. 3 stretches are compositionally biased toward polar residues: residues 128–149, 158–169, and 178–194; these read TQLS…SKQV, PTETPVASQSSD, and PRSS…NSSK. At S199 the chain carries Phosphoserine. T202 carries the phosphothreonine modification. Positions 205 to 215 are enriched in polar residues; that stretch reads QDDNSPGTLTL. At S209 the chain carries Phosphoserine. At T212 the chain carries Phosphothreonine. The short motif at 258–260 is the KEN box element; that stretch reads KEN.

In terms of assembly, interacts with SKP1. Part of a SCF (SKP1-cullin-F-box) protein ligase complex. Ubiquitinated and degraded by the APC/C-Cdh1 complex.

It localises to the cytoplasm. The protein localises to the cytosol. Its pathway is protein modification; protein ubiquitination. F-box-like protein which is required for entry into mitosis. Acts by participating in E3 ligase complexes that mediate the ubiquitination and degradation of WEE1 kinase at G2/M phase. This Homo sapiens (Human) protein is Cell division cycle-associated protein 3 (CDCA3).